Consider the following 235-residue polypeptide: MFIWTSGRTSSSYRQDEKRNIYQKIRDHDLLDKRKTVTALKAGEDRAILLGLAMMVCSIMMYFLLGITLLRSYMQSVWTEEAQCALLNVSITETFNCSFSCGPDCWKLSQYPCLQVYVNLTSSGERLLLYHTEETMKINQKCSYIPKCGNNFEESMSLVSVVMENFRRHQHFPCYSDPEGNQKSVILTKLYSSNVLFHSLFWPTCMMAGGVAIVAMVKLTQYLSLLCERIQRINR.

Residues 1 to 45 (MFIWTSGRTSSSYRQDEKRNIYQKIRDHDLLDKRKTVTALKAGED) are ball and chain. Over 1 to 46 (MFIWTSGRTSSSYRQDEKRNIYQKIRDHDLLDKRKTVTALKAGEDR) the chain is Cytoplasmic. Residues 47-67 (AILLGLAMMVCSIMMYFLLGI) traverse the membrane as a helical segment. The Extracellular portion of the chain corresponds to 68-194 (TLLRSYMQSV…VILTKLYSSN (127 aa)). 3 N-linked (GlcNAc...) asparagine glycosylation sites follow: Asn88, Asn96, and Asn119. Residues 195-215 (VLFHSLFWPTCMMAGGVAIVA) traverse the membrane as a helical segment. Topologically, residues 216–235 (MVKLTQYLSLLCERIQRINR) are cytoplasmic.

Belongs to the KCNMB (TC 8.A.14.1) family. KCNMB2 subfamily. Interacts with KCNMA1 tetramer. There are probably 4 molecules of KCMNB2 per KCNMA1 tetramer. Post-translationally, N-glycosylated.

Its subcellular location is the membrane. Its function is as follows. Regulatory subunit of the calcium activated potassium KCNMA1 (maxiK) channel. Modulates the calcium sensitivity and gating kinetics of KCNMA1, thereby contributing to KCNMA1 channel diversity. Acts as a negative regulator that confers rapid and complete inactivation of KCNMA1 channel complex. The polypeptide is Calcium-activated potassium channel subunit beta-2 (Kcnmb2) (Mus musculus (Mouse)).